The primary structure comprises 552 residues: HTH-type transcriptional regulator SgrR (552 aa).

In terms of domain architecture, HTH marR-type spans 1-116 (MPSGRLQQQF…LISHLGRSFR (116 aa)). The segment at residues 26–49 (LNELADLLNCSRRHMRTLLNTMQA) is a DNA-binding region (H-T-H motif). The tract at residues 163–493 (ELEADIAHHW…RDWQGDAAQW (331 aa)) is solute-binding.

Activates the small RNA gene sgrS under glucose-phosphate stress conditions as well as yfdZ. Represses its own transcription under both stress and non-stress conditions. Might act as a sensor of the intracellular accumulation of phosphoglucose by binding these molecules in its C-terminal solute-binding domain. This is HTH-type transcriptional regulator SgrR from Salmonella typhimurium (strain LT2 / SGSC1412 / ATCC 700720).